A 374-amino-acid polypeptide reads, in one-letter code: 8-amino-7-oxononanoate synthase (374 aa).

The substrate site is built by R22 and R29. Pyridoxal 5'-phosphate is bound at residue 109–110; that stretch reads GY. H134 contributes to the substrate binding site. Residues S182, 207 to 210, and 227 to 230 contribute to the pyridoxal 5'-phosphate site; these read DDAH and TLSK. K230 is modified (N6-(pyridoxal phosphate)lysine). T339 serves as a coordination point for substrate.

The protein belongs to the class-II pyridoxal-phosphate-dependent aminotransferase family. BioF subfamily. Homodimer. The cofactor is pyridoxal 5'-phosphate.

It catalyses the reaction 6-carboxyhexanoyl-[ACP] + L-alanine + H(+) = (8S)-8-amino-7-oxononanoate + holo-[ACP] + CO2. The protein operates within cofactor biosynthesis; biotin biosynthesis. In terms of biological role, catalyzes the decarboxylative condensation of pimeloyl-[acyl-carrier protein] and L-alanine to produce 8-amino-7-oxononanoate (AON), [acyl-carrier protein], and carbon dioxide. The protein is 8-amino-7-oxononanoate synthase of Methylobacterium radiotolerans (strain ATCC 27329 / DSM 1819 / JCM 2831 / NBRC 15690 / NCIMB 10815 / 0-1).